Consider the following 284-residue polypeptide: UDP-N-acetylenolpyruvoylglucosamine reductase (284 aa).

An FAD-binding PCMH-type domain is found at 12–174 (KIGGRVKYLV…TRVMMSFKRE (163 aa)). Residue R153 is part of the active site. S203 serves as the catalytic Proton donor. The active site involves E274.

Belongs to the MurB family. FAD is required as a cofactor.

The protein localises to the cytoplasm. It catalyses the reaction UDP-N-acetyl-alpha-D-muramate + NADP(+) = UDP-N-acetyl-3-O-(1-carboxyvinyl)-alpha-D-glucosamine + NADPH + H(+). It functions in the pathway cell wall biogenesis; peptidoglycan biosynthesis. Its function is as follows. Cell wall formation. This chain is UDP-N-acetylenolpyruvoylglucosamine reductase, found in Thermotoga petrophila (strain ATCC BAA-488 / DSM 13995 / JCM 10881 / RKU-1).